The following is a 265-amino-acid chain: Palmitoyltransferase ZDHHC21 (265 aa).

Residues 1-16 are Cytoplasmic-facing; it reads MGLRIHFVVDPHGWCC. A helical membrane pass occupies residues 17–37; it reads MGLIVFVWLYNFFLIPKIVLF. Over 38–44 the chain is Extracellular; that stretch reads PHYEEGH. The helical transmembrane segment at 45–65 threads the bilayer; it reads IPGILIIIFYGIAMFCLVALV. Residues 66–133 are Cytoplasmic-facing; that stretch reads RASITDPGRL…NNCVGEDNHW (68 aa). Positions 90–140 constitute a DHHC domain; that stretch reads ELCNKCNLMRPKRSHHCSRCGHCVRRMDHHCPWINNCVGEDNHWLFLQLCF. The active-site S-palmitoyl cysteine intermediate is C120. A helical membrane pass occupies residues 134 to 154; that stretch reads LFLQLCFYTELLTCYALMFSF. Residues 155–185 lie on the Extracellular side of the membrane; sequence CHYYYFLPLKKRNLDLFVVRHELAIMRLAAF. A helical transmembrane segment spans residues 186 to 206; the sequence is MGITMLVGITGLFYTQLIGII. At 207–265 the chain is on the cytoplasmic side; sequence TDTTSIEKMSNCCEEISRPRKPWQQTFSEVFGTRWKILWFIPFRRRQPLRVPYHFANHV.

This sequence belongs to the DHHC palmitoyltransferase family.

It is found in the golgi apparatus membrane. Its subcellular location is the golgi apparatus. It localises to the cis-Golgi network membrane. The protein resides in the cell membrane. The enzyme catalyses L-cysteinyl-[protein] + hexadecanoyl-CoA = S-hexadecanoyl-L-cysteinyl-[protein] + CoA. Functionally, palmitoyltransferase that catalyzes the addition of palmitate onto various protein substrates. Palmitoylates sex steroid hormone receptors, including ESR1, PGR and AR, thereby regulating their targeting to the plasma membrane. This affects rapid intracellular signaling by sex hormones via ERK and AKT kinases and the generation of cAMP, but does not affect that mediated by their nuclear receptor. Palmitoylates FYN, regulates its localization in hair follicles and plays a key role in epidermal homeostasis and hair follicle differentiation. Through the palmitoylation of PLCB1 and the regulation of PLCB1 downstream signaling may indirectly regulate the function of the endothelial barrier and the adhesion of leukocytes to the endothelium. Also has a palmitoyltransferase activity toward ADRA1D, positively regulating its activity and expression and may thereby play a role in vascular contraction. May also palmitoylate eNOS and LCK. This is Palmitoyltransferase ZDHHC21 from Bos taurus (Bovine).